The primary structure comprises 205 residues: Probable GTP-binding protein EngB (205 aa).

Positions 22–195 constitute an EngB-type G domain; that stretch reads NLPEVALVGR…LDLLDYFWNG (174 aa). Residues 30–37, 57–61, 75–78, 142–145, and 174–176 each bind GTP; these read GRSNVGKS, GKTQT, DLPG, TKAD, and FSA. Residues Ser37 and Thr59 each contribute to the Mg(2+) site.

This sequence belongs to the TRAFAC class TrmE-Era-EngA-EngB-Septin-like GTPase superfamily. EngB GTPase family. Mg(2+) is required as a cofactor.

Functionally, necessary for normal cell division and for the maintenance of normal septation. This is Probable GTP-binding protein EngB from Heliobacterium modesticaldum (strain ATCC 51547 / Ice1).